The primary structure comprises 180 residues: Ribulose bisphosphate carboxylase small subunit, chloroplastic (180 aa).

The N-terminal 57 residues, 1–57 (MASVVASAAVVTPFAASAASTTKSSQIVSVQAGLKAGVFGGKSEWQTKTQTNGSRVS), are a transit peptide targeting the chloroplast.

It belongs to the RuBisCO small chain family. As to quaternary structure, heterohexadecamer of 8 large and 8 small subunits.

Its subcellular location is the plastid. The protein resides in the chloroplast. Its function is as follows. RuBisCO catalyzes two reactions: the carboxylation of D-ribulose 1,5-bisphosphate, the primary event in carbon dioxide fixation, as well as the oxidative fragmentation of the pentose substrate. Both reactions occur simultaneously and in competition at the same active site. Although the small subunit is not catalytic it is essential for maximal activity. This is Ribulose bisphosphate carboxylase small subunit, chloroplastic from Marchantia paleacea (Liverwort).